We begin with the raw amino-acid sequence, 267 residues long: tRNA pseudouridine synthase A (267 aa).

The Nucleophile role is filled by Asp55. Tyr111 lines the substrate pocket.

It belongs to the tRNA pseudouridine synthase TruA family.

The catalysed reaction is uridine(38/39/40) in tRNA = pseudouridine(38/39/40) in tRNA. Functionally, formation of pseudouridine at positions 38, 39 and 40 in the anticodon stem and loop of transfer RNAs. The chain is tRNA pseudouridine synthase A from Thermococcus gammatolerans (strain DSM 15229 / JCM 11827 / EJ3).